Reading from the N-terminus, the 129-residue chain is Small ribosomal subunit protein uS11 (129 aa).

The protein belongs to the universal ribosomal protein uS11 family. In terms of assembly, part of the 30S ribosomal subunit. Interacts with proteins S7 and S18. Binds to IF-3.

Its function is as follows. Located on the platform of the 30S subunit, it bridges several disparate RNA helices of the 16S rRNA. Forms part of the Shine-Dalgarno cleft in the 70S ribosome. In Salmonella typhi, this protein is Small ribosomal subunit protein uS11.